A 189-amino-acid chain; its full sequence is Peptidyl-tRNA hydrolase (189 aa).

Y14 is a binding site for tRNA. Residue H19 is the Proton acceptor of the active site. TRNA contacts are provided by Y64, N66, and N112.

Belongs to the PTH family. In terms of assembly, monomer.

Its subcellular location is the cytoplasm. It carries out the reaction an N-acyl-L-alpha-aminoacyl-tRNA + H2O = an N-acyl-L-amino acid + a tRNA + H(+). Hydrolyzes ribosome-free peptidyl-tRNAs (with 1 or more amino acids incorporated), which drop off the ribosome during protein synthesis, or as a result of ribosome stalling. Its function is as follows. Catalyzes the release of premature peptidyl moieties from peptidyl-tRNA molecules trapped in stalled 50S ribosomal subunits, and thus maintains levels of free tRNAs and 50S ribosomes. In Clostridium botulinum (strain 657 / Type Ba4), this protein is Peptidyl-tRNA hydrolase.